The following is a 1216-amino-acid chain: MLTKFETKSNRVKGLSFHPKRPWILASLHSGVIQLWDYRMGTLIDRFDEHEGPVRGVHFHNSQPLFVSGGDDYKIKVWNYKNHRCLFTLLGHLDYIRTVQFHHEYPWIVSASDDQTIRIWNWQSRTCVSVLTGHNHYVMCASFHPKEDLVVSASLDQTVRVWDIGALRKKTVSPADDIMRLTQMNSDLFGGVDAIVKYVLEGHDRGVNWAAFHPTLPLIVSGADDRQVKLWRMNETKAWEVDTLRGHMNNVSSVMFHAKQDIIVSNSEDKSIRVWDATKRTGLQTFRREHDRFWILAVHPEMNLLAAGHDSGMIVFKLERERPAFALSGDSLFYAKDRFLRYYEYSTQRDSQVIPIRRPGTPSLNQSPRTLSYSPTENAVLICSDLDGGSYELYIIPKDSVGRSDVVQDAKRGTGGSAVFIARNRFAVLEKSTSQVLVKNLKNEVVKKSPLPIPTDAIFYAGTGNLLCRSEDKVVIFDLQQRLVLGELQTPFVRYVVWSSDMESVALLSKHTIIIASKKLVLQCTLHETIRVKSGAWDDNGVFIYTTLNHIKYCLPNGDSGIIRTLDVPIYITKVSGNTIFCLDRDGKNKAITINATEYIFKLSLLRKRYDHVMSMIKNSQLCGQAMIAYLQQKGFPEVALHFVEDERIRFNLALESGNISVAVASATQINEKDHWYRLGVEALRQGNSGIVEFAYQQTKNFERLSFLYLITGNLDKLSKLMKIAEVKNNVMGQFHNALYLGDVKERVKILENAGHLPLAYITASVHGLNDIAERLATELGDNVPSLPEGKTPSLLMPPTPIMCGGDWPLLRVMKGIFEGGLESADRGGTVDEEDVEGDWGEELDINVDGMENRDIEDILAAAEAGEEENDEEGGWGLEDLVLPPELDTPKASANARSSVFVTPPQGMPVSQSWSQKSSLAAEQAAAGSFDTAMRLLHRQLGIKNFTPLKSMFLDLFNGSHSYLRAFSSCPVVPLAIERGWSESSSPNVRSPPALVYDFSQLDEKLKSGYKATTTGKFTEALRLFLSILHTIPLVVVETRREVDEVKELIVIVKEYVLGLQMELKRREMKDDPVRQQELAAYFTHCNLQTPHLRLALLSAMGVCYKAKNLATASNFARRLLETSPVDSQAKMARQVVQAAERNMTDETKLNYDFRNPFVVCGSTYVPIYRGQKDVSCPYCTARFVPNQEGNICTVCDLAVIGADASGLLCSPSQVR.

WD repeat units lie at residues 7 to 48, 49 to 88, 91 to 132, 133 to 172, 202 to 241, 246 to 285, 288 to 326, and 363 to 404; these read TKSN…DRFD, EHEGPVRGVHFHNSQPLFVSGGDDYKIKVWNYKNHRCLFT, GHLD…SVLT, GHNHYVMCASFHPKEDLVVSASLDQTVRVWDIGALRKKTV, GHDRGVNWAAFHPTLPLIVSGADDRQVKLWRMNETKAWEV, GHMNNVSSVMFHAKQDIIVSNSEDKSIRVWDATKRTGLQT, REHDRFWILAVHPEMNLLAAGHDSGMIVFKLERERPAFA, and SLNQ…VGRS.

As to quaternary structure, oligomeric complex that consists of at least the alpha, beta, beta', gamma, delta, epsilon and zeta subunits.

The protein localises to the cytoplasm. The protein resides in the golgi apparatus membrane. It localises to the cytoplasmic vesicle. Its subcellular location is the COPI-coated vesicle membrane. In terms of biological role, the coatomer is a cytosolic protein complex that binds to dilysine motifs and reversibly associates with Golgi non-clathrin-coated vesicles, which further mediate biosynthetic protein transport from the ER, via the Golgi up to the trans Golgi network. Coatomer complex is required for budding from Golgi membranes, and is essential for the retrograde Golgi-to-ER transport of dilysine-tagged proteins. The chain is Coatomer subunit alpha-1 from Arabidopsis thaliana (Mouse-ear cress).